The primary structure comprises 639 residues: MEIIRSNFKCNLHKVYQAIEEADFFAIDGEFSGISDGPSVSALTNGFDTPEERYQKLKKHSMDFLLFQFGLCTFKYDYTDSKYITKSFNFYVFPKPFNRSPPDVKFVCQSSSIDFLASQGFDFNKVFRNGIPYLNQEEERQLREQYDEKRSQANGAGALSYVSPNTSKCPVTIPEDQKKFIDQVVEKIEDLLQSEENKNLDLEPCTGFQRKLIYQTLSWKYPKGIHVETLETEKKERYIVISKVDEEERKRREQQKHAKEQEELNDAVGFSRVIHAIANSGKLVIGHNMLLDVMHTVHQFYCPLPADLSEFKEMTTCVFPRLLDTKLMASTQPFKDIINNTSLAELEKRLKETPFSPPKVESAEGFPSYDTASEQLHEAGYDAYITGLCFISMANYLGSFLSPPKIHVSARSKLIEPFFNKLFLMRVMDIPYLNLEGPDLQPKRDHVLHVTFPKEWKTSDLYQLFSAFGNIQISWIDDTSAFVSLSQPEQVKIAVNTSKYAESYRIQTYAEYVGRKQEEKQIKRKWTEDSWKEADSKRLNPQCIPYALQNHYYRNNSFTAPSTVGKRNLSPSQEEAGLEDGVSGEISDTELEQTDSCAEPLSEGRKKAKKLKRMKKELSPAVSISKNSPATLFEVPDTW.

Aspartate 28 and glutamate 30 together coordinate a divalent metal cation. 2 positions are modified to phosphoserine: serine 163 and serine 167. The R3H domain maps to 178–245 (KKFIDQVVEK…ERYIVISKVD (68 aa)). Lysine 220 is modified (N6-acetyllysine). Aspartate 292 and aspartate 382 together coordinate a divalent metal cation. Lysine 499 bears the N6-acetyllysine mark. Residue serine 530 is modified to Phosphoserine. The residue at position 557 (serine 557) is a Phosphoserine; by MAPKAPK2. Positions 563 to 611 (TVGKRNLSPSQEEAGLEDGVSGEISDTELEQTDSCAEPLSEGRKKAKKL) are disordered. Phosphoserine occurs at positions 583, 587, 619, 623, and 628. Threonine 631 is subject to Phosphothreonine.

It belongs to the CAF1 family. As to quaternary structure, homodimer. Found in a mRNA decay complex with RENT1, RENT2 and RENT3B. Interacts with KHSRP. Interacts with CELF1/CUGBP1. Interacts with ZC3HAV1 in an RNA-independent manner. Interacts with DHX36. The cofactor is Mg(2+). Post-translationally, phosphorylation by MAPKAPK2, preventing GADD45A mRNA degradation after genotoxic stress.

Its subcellular location is the nucleus. It localises to the cytoplasm. The protein resides in the nucleolus. It catalyses the reaction Exonucleolytic cleavage of poly(A) to 5'-AMP.. Its function is as follows. 3'-exoribonuclease that has a preference for poly(A) tails of mRNAs, thereby efficiently degrading poly(A) tails. Exonucleolytic degradation of the poly(A) tail is often the first step in the decay of eukaryotic mRNAs and is also used to silence certain maternal mRNAs translationally during oocyte maturation and early embryonic development. Interacts with both the 3'-end poly(A) tail and the 5'-end cap structure during degradation, the interaction with the cap structure being required for an efficient degradation of poly(A) tails. Involved in nonsense-mediated mRNA decay, a critical process of selective degradation of mRNAs that contain premature stop codons. Also involved in degradation of inherently unstable mRNAs that contain AU-rich elements (AREs) in their 3'-UTR, possibly via its interaction with KHSRP. Probably mediates the removal of poly(A) tails of AREs mRNAs, which constitutes the first step of destabilization. Also able to recognize poly(A) tails of microRNAs such as MIR21 and H/ACA box snoRNAs (small nucleolar RNAs) leading to microRNAs degradation or snoRNA increased stability. In Pongo abelii (Sumatran orangutan), this protein is Poly(A)-specific ribonuclease PARN (PARN).